Reading from the N-terminus, the 360-residue chain is Peptide chain release factor 1 (360 aa).

An N5-methylglutamine modification is found at Q237.

The protein belongs to the prokaryotic/mitochondrial release factor family. Post-translationally, methylated by PrmC. Methylation increases the termination efficiency of RF1.

The protein resides in the cytoplasm. Functionally, peptide chain release factor 1 directs the termination of translation in response to the peptide chain termination codons UAG and UAA. This Pseudomonas aeruginosa (strain LESB58) protein is Peptide chain release factor 1.